The primary structure comprises 622 residues: Polypeptide N-acetylgalactosaminyltransferase 18 (622 aa).

At 1–12 (MVCTRKTKTLVS) the chain is on the cytoplasmic side. Residues 13–35 (TCVILSGMTNIICLLYVGWVTNY) form a helical; Signal-anchor for type II membrane protein membrane-spanning segment. The Lumenal segment spans residues 36–622 (IASVYVRGQE…ITNVLRSLVS (587 aa)). 5 disulfide bridges follow: cysteine 144/cysteine 392, cysteine 383/cysteine 462, cysteine 497/cysteine 513, cysteine 545/cysteine 558, and cysteine 586/cysteine 606. The N-linked (GlcNAc...) asparagine glycan is linked to asparagine 146. The catalytic subdomain A stretch occupies residues 153 to 267 (LPEVSIVFIF…VGWAEPVLTR (115 aa)). Aspartate 194 is a substrate binding site. The N-linked (GlcNAc...) asparagine glycan is linked to asparagine 195. Residues aspartate 251 and histidine 253 each contribute to the Mn(2+) site. A glycan (N-linked (GlcNAc...) asparagine) is linked at asparagine 320. Positions 324-400 (PIRSPALIGC…PCSRIAHIER (77 aa)) are catalytic subdomain B. Mn(2+) is bound at residue histidine 397. Residues arginine 400 and tyrosine 405 each contribute to the substrate site. A Ricin B-type lectin domain is found at 484–614 (AYGVLQNSLK…KCSGQHWTIT (131 aa)).

This sequence belongs to the glycosyltransferase 2 family. GalNAc-T subfamily. Mn(2+) is required as a cofactor.

Its subcellular location is the golgi apparatus membrane. It catalyses the reaction L-seryl-[protein] + UDP-N-acetyl-alpha-D-galactosamine = a 3-O-[N-acetyl-alpha-D-galactosaminyl]-L-seryl-[protein] + UDP + H(+). It carries out the reaction L-threonyl-[protein] + UDP-N-acetyl-alpha-D-galactosamine = a 3-O-[N-acetyl-alpha-D-galactosaminyl]-L-threonyl-[protein] + UDP + H(+). It functions in the pathway protein modification; protein glycosylation. In terms of biological role, catalyzes the initial reaction in O-linked oligosaccharide biosynthesis, the transfer of an N-acetyl-D-galactosamine (GalNAc) residue from UDP-GalNAc to a serine or threonine residue on the protein receptor. The protein is Polypeptide N-acetylgalactosaminyltransferase 18 (Galnt18) of Mus musculus (Mouse).